Here is a 210-residue protein sequence, read N- to C-terminus: Somatotropin (210 aa).

The first 23 residues, 1 to 23, serve as a signal peptide directing secretion; the sequence is MARVLVLLSVVLVSLLVNQGRAS. H38 contributes to the Zn(2+) binding site. An intrachain disulfide couples C71 to C183. E192 lines the Zn(2+) pocket. Residues C200 and C208 are joined by a disulfide bond.

Belongs to the somatotropin/prolactin family.

It localises to the secreted. Functionally, growth hormone plays an important role in growth control. This is Somatotropin (gh) from Cyprinus carpio (Common carp).